Here is a 252-residue protein sequence, read N- to C-terminus: Imidazole glycerol phosphate synthase subunit HisF (252 aa).

Active-site residues include D11 and D130.

It belongs to the HisA/HisF family. As to quaternary structure, heterodimer of HisH and HisF.

The protein resides in the cytoplasm. The enzyme catalyses 5-[(5-phospho-1-deoxy-D-ribulos-1-ylimino)methylamino]-1-(5-phospho-beta-D-ribosyl)imidazole-4-carboxamide + L-glutamine = D-erythro-1-(imidazol-4-yl)glycerol 3-phosphate + 5-amino-1-(5-phospho-beta-D-ribosyl)imidazole-4-carboxamide + L-glutamate + H(+). The protein operates within amino-acid biosynthesis; L-histidine biosynthesis; L-histidine from 5-phospho-alpha-D-ribose 1-diphosphate: step 5/9. IGPS catalyzes the conversion of PRFAR and glutamine to IGP, AICAR and glutamate. The HisF subunit catalyzes the cyclization activity that produces IGP and AICAR from PRFAR using the ammonia provided by the HisH subunit. The protein is Imidazole glycerol phosphate synthase subunit HisF of Hyphomonas neptunium (strain ATCC 15444).